The following is a 126-amino-acid chain: Ribonuclease P protein component (126 aa).

This sequence belongs to the RnpA family. In terms of assembly, consists of a catalytic RNA component (M1 or rnpB) and a protein subunit.

It carries out the reaction Endonucleolytic cleavage of RNA, removing 5'-extranucleotides from tRNA precursor.. Functionally, RNaseP catalyzes the removal of the 5'-leader sequence from pre-tRNA to produce the mature 5'-terminus. It can also cleave other RNA substrates such as 4.5S RNA. The protein component plays an auxiliary but essential role in vivo by binding to the 5'-leader sequence and broadening the substrate specificity of the ribozyme. The sequence is that of Ribonuclease P protein component from Brevibacillus brevis (strain 47 / JCM 6285 / NBRC 100599).